The primary structure comprises 217 residues: Photosynthetic NDH subunit of lumenal location 4, chloroplastic (217 aa).

A chloroplast-targeting transit peptide spans M1–L34. Cystine bridges form between C87-C99 and C188-C193. Residues G112–Y211 form the PPIase FKBP-type domain.

The protein belongs to the FKBP-type PPIase family. In terms of assembly, part of the chloroplast NDH complex, composed of a mixture of chloroplast and nucleus encoded subunits. Component of the NDH lumenal subcomplex, at least composed of PnsL1, PnsL2, PnsL3, PnsL4 and PnsL5.

The protein resides in the plastid. Its subcellular location is the chloroplast thylakoid lumen. It carries out the reaction [protein]-peptidylproline (omega=180) = [protein]-peptidylproline (omega=0). Its function is as follows. NDH shuttles electrons from NAD(P)H:plastoquinone, via FMN and iron-sulfur (Fe-S) centers, to quinones in the photosynthetic chain and possibly in a chloroplast respiratory chain. The immediate electron acceptor for the enzyme in this species is believed to be plastoquinone. Couples the redox reaction to proton translocation, and thus conserves the redox energy in a proton gradient. PPIases accelerate the folding of proteins. It catalyzes the cis-trans isomerization of proline imidic peptide bonds in oligopeptides. Seems to be essential for stabilizing the NDH subcomplex A. This is Photosynthetic NDH subunit of lumenal location 4, chloroplastic from Arabidopsis thaliana (Mouse-ear cress).